The chain runs to 511 residues: Phosphoenolpyruvate carboxylase (511 aa).

The protein belongs to the PEPCase type 2 family. As to quaternary structure, homotetramer. Mg(2+) is required as a cofactor.

It catalyses the reaction oxaloacetate + phosphate = phosphoenolpyruvate + hydrogencarbonate. Functionally, catalyzes the irreversible beta-carboxylation of phosphoenolpyruvate (PEP) to form oxaloacetate (OAA), a four-carbon dicarboxylic acid source for the tricarboxylic acid cycle. This chain is Phosphoenolpyruvate carboxylase, found in Saccharolobus islandicus (strain M.16.27) (Sulfolobus islandicus).